Here is a 95-residue protein sequence, read N- to C-terminus: Putative per-hexamer repeat protein 4 (95 aa).

In Mus musculus (Mouse), this protein is Putative per-hexamer repeat protein 4 (Phxr4).